A 442-amino-acid chain; its full sequence is Glycoprotein endo-alpha-1,2-mannosidase-like protein (442 aa).

Topologically, residues 1–8 are cytoplasmic; the sequence is MNRLRRKA. A helical; Signal-anchor for type II membrane protein transmembrane segment spans residues 9 to 29; it reads CVALLLFTLFIFGTMMGLRTL. The Lumenal segment spans residues 30-442; the sequence is KPTDGFSDLA…FSKEKEQWLM (413 aa).

It belongs to the glycosyl hydrolase 99 family.

The protein localises to the golgi apparatus membrane. This Danio rerio (Zebrafish) protein is Glycoprotein endo-alpha-1,2-mannosidase-like protein (maneal).